A 282-amino-acid polypeptide reads, in one-letter code: Probable endonuclease 4 (282 aa).

Histidine 69, histidine 109, glutamate 145, aspartate 179, histidine 182, histidine 216, aspartate 229, histidine 231, and glutamate 261 together coordinate Zn(2+).

This sequence belongs to the AP endonuclease 2 family. The cofactor is Zn(2+).

It carries out the reaction Endonucleolytic cleavage to 5'-phosphooligonucleotide end-products.. Functionally, endonuclease IV plays a role in DNA repair. It cleaves phosphodiester bonds at apurinic or apyrimidinic (AP) sites, generating a 3'-hydroxyl group and a 5'-terminal sugar phosphate. In Edwardsiella ictaluri (strain 93-146), this protein is Probable endonuclease 4.